The following is a 470-amino-acid chain: tRNA-2-methylthio-N(6)-dimethylallyladenosine synthase (470 aa).

The MTTase N-terminal domain maps to 20 to 138; that stretch reads PRVHIETFGC…LPELVERARS (119 aa). Positions 29, 65, 99, 176, 180, and 183 each coordinate [4Fe-4S] cluster. Residues 162–398 enclose the Radical SAM core domain; sequence REGDLKAWVT…MEVQNRIARA (237 aa). Residues 401 to 464 enclose the TRAM domain; it reads EARVGKVYDI…TWTLEGELVE (64 aa).

The protein belongs to the methylthiotransferase family. MiaB subfamily. In terms of assembly, monomer. Requires [4Fe-4S] cluster as cofactor.

It is found in the cytoplasm. It catalyses the reaction N(6)-dimethylallyladenosine(37) in tRNA + (sulfur carrier)-SH + AH2 + 2 S-adenosyl-L-methionine = 2-methylsulfanyl-N(6)-dimethylallyladenosine(37) in tRNA + (sulfur carrier)-H + 5'-deoxyadenosine + L-methionine + A + S-adenosyl-L-homocysteine + 2 H(+). In terms of biological role, catalyzes the methylthiolation of N6-(dimethylallyl)adenosine (i(6)A), leading to the formation of 2-methylthio-N6-(dimethylallyl)adenosine (ms(2)i(6)A) at position 37 in tRNAs that read codons beginning with uridine. The sequence is that of tRNA-2-methylthio-N(6)-dimethylallyladenosine synthase from Symbiobacterium thermophilum (strain DSM 24528 / JCM 14929 / IAM 14863 / T).